A 466-amino-acid polypeptide reads, in one-letter code: UDP-N-acetylmuramoylalanine--D-glutamate ligase (466 aa).

124–130 (GSDGKTT) is an ATP binding site.

This sequence belongs to the MurCDEF family.

It localises to the cytoplasm. The enzyme catalyses UDP-N-acetyl-alpha-D-muramoyl-L-alanine + D-glutamate + ATP = UDP-N-acetyl-alpha-D-muramoyl-L-alanyl-D-glutamate + ADP + phosphate + H(+). The protein operates within cell wall biogenesis; peptidoglycan biosynthesis. Functionally, cell wall formation. Catalyzes the addition of glutamate to the nucleotide precursor UDP-N-acetylmuramoyl-L-alanine (UMA). The sequence is that of UDP-N-acetylmuramoylalanine--D-glutamate ligase from Acetivibrio thermocellus (strain ATCC 27405 / DSM 1237 / JCM 9322 / NBRC 103400 / NCIMB 10682 / NRRL B-4536 / VPI 7372) (Clostridium thermocellum).